The chain runs to 119 residues: Large ribosomal subunit protein uL18 (119 aa).

It belongs to the universal ribosomal protein uL18 family. Part of the 50S ribosomal subunit; part of the 5S rRNA/L5/L18/L25 subcomplex. Contacts the 5S and 23S rRNAs.

In terms of biological role, this is one of the proteins that bind and probably mediate the attachment of the 5S RNA into the large ribosomal subunit, where it forms part of the central protuberance. In Clostridium botulinum (strain ATCC 19397 / Type A), this protein is Large ribosomal subunit protein uL18.